Here is a 240-residue protein sequence, read N- to C-terminus: ATP-dependent dethiobiotin synthetase BioD (240 aa).

13–18 is a binding site for ATP; sequence EVGKTV. Thr17 serves as a coordination point for Mg(2+). Residue Lys38 is part of the active site. Ser42 contributes to the substrate binding site. ATP contacts are provided by residues Asp55, 116 to 119, 176 to 177, and 205 to 207; these read EGAG, ND, and PWL. Mg(2+) is bound by residues Asp55 and Glu116.

Belongs to the dethiobiotin synthetase family. In terms of assembly, homodimer. The cofactor is Mg(2+).

The protein localises to the cytoplasm. It carries out the reaction (7R,8S)-7,8-diammoniononanoate + CO2 + ATP = (4R,5S)-dethiobiotin + ADP + phosphate + 3 H(+). The protein operates within cofactor biosynthesis; biotin biosynthesis; biotin from 7,8-diaminononanoate: step 1/2. Its function is as follows. Catalyzes a mechanistically unusual reaction, the ATP-dependent insertion of CO2 between the N7 and N8 nitrogen atoms of 7,8-diaminopelargonic acid (DAPA, also called 7,8-diammoniononanoate) to form a ureido ring. This is ATP-dependent dethiobiotin synthetase BioD from Pseudescherichia vulneris (Escherichia vulneris).